Reading from the N-terminus, the 320-residue chain is MDTHRADASQRSQAPAARPRHAVHSIDHYALEVPDLAVAERFLDAFGLTVARTPECLEVYAADQRCWARFYEGERKRLAYLSFSCFEGDFAGIRQQLAASGATLVEDPRYGDESGVWFFDPDGNLVQVKIGPKTSPSSKSPARLEGAPGGQRGAVVRSQVQRVLPRRLSHVLLFTPSVQRALDFYRDALGLRLSDRSDDVIAFTHAPYGSDHHLLALVKSSARGWHHAAWDVADVNEVGQGASQMAKAGYTQGWGTGRHVLGSNYFFYVLDPWGSFCEYSADIDYIPAGQAWPAGDFAAEDSLYQWGPDVPEYFVRNTEA.

Disordered stretches follow at residues 1–21 and 131–153; these read MDTH…RPRH and GPKT…GQRG. 2 consecutive VOC domains span residues 25-131 and 167-282; these read SIDH…VKIG and RLSH…YSAD. Fe cation-binding residues include His-170, His-227, and Glu-278.

This sequence belongs to the extradiol ring-cleavage dioxygenase family. It depends on Fe(2+) as a cofactor.

It carries out the reaction catechol + O2 = (2Z,4E)-2-hydroxy-6-oxohexa-2,4-dienoate + H(+). The protein is Metapyrocatechase 2 (mcpII) of Cupriavidus necator (Alcaligenes eutrophus).